We begin with the raw amino-acid sequence, 37 residues long: Large ribosomal subunit protein bL36c (37 aa).

This sequence belongs to the bacterial ribosomal protein bL36 family.

The protein localises to the plastid. Its subcellular location is the chloroplast. In Chlorella vulgaris (Green alga), this protein is Large ribosomal subunit protein bL36c (rpl36).